Reading from the N-terminus, the 509-residue chain is 4-aminobutyrate aminotransferase (509 aa).

166 to 167 (GS) serves as a coordination point for pyridoxal 5'-phosphate. Position 223 (R223) interacts with substrate. K363 bears the N6-(pyridoxal phosphate)lysine mark. T387 contacts pyridoxal 5'-phosphate.

It belongs to the class-III pyridoxal-phosphate-dependent aminotransferase family. As to quaternary structure, homodimer. Pyridoxal 5'-phosphate serves as cofactor.

It is found in the cytoplasm. It catalyses the reaction 4-aminobutanoate + 2-oxoglutarate = succinate semialdehyde + L-glutamate. In terms of biological role, deaminates gamma-aminobutyric acid (GABA) to succinate-semialdehyde, which in turn is converted to succinate by the succinate semialdehyde dehydrogenase. Not required for the utilization of GABA as nitrogen source. The chain is 4-aminobutyrate aminotransferase (GATA) from Mycosarcoma maydis (Corn smut fungus).